Reading from the N-terminus, the 460-residue chain is Centrosomal protein CEP57L1 (460 aa).

Residue Ser49 is modified to Phosphoserine. Coiled-coil stretches lie at residues 51–228 and 317–384; these read NSQA…EISK and ISIC…LKKH. Polar residues predominate over residues 399–410; it reads KMSEASGIQQED. The tract at residues 399-423 is disordered; the sequence is KMSEASGIQQEDSYPKGSKNIKNSP.

Belongs to the translokin family.

It is found in the cytoplasm. Its subcellular location is the cytoskeleton. It localises to the microtubule organizing center. The protein resides in the centrosome. Its function is as follows. Centrosomal protein which may be required for microtubule attachment to centrosomes. The protein is Centrosomal protein CEP57L1 (CEP57L1) of Homo sapiens (Human).